A 350-amino-acid chain; its full sequence is Kelch domain-containing protein 8A (350 aa).

Kelch repeat units follow at residues 1-31, 32-79, 81-127, 128-175, 176-222, 224-278, and 279-326; these read MEVP…ETGG, QVYA…ALGK, IMVI…AKDY, RVYA…LRGS, KIYV…TLDN, LYSL…SLSG, and RVIV…VVKN.

This Homo sapiens (Human) protein is Kelch domain-containing protein 8A (KLHDC8A).